A 225-amino-acid chain; its full sequence is NAD(P)H-quinone oxidoreductase subunit K, chloroplastic (225 aa).

[4Fe-4S] cluster contacts are provided by C43, C44, C108, and C139.

It belongs to the complex I 20 kDa subunit family. As to quaternary structure, NDH is composed of at least 16 different subunits, 5 of which are encoded in the nucleus. Requires [4Fe-4S] cluster as cofactor.

The protein localises to the plastid. The protein resides in the chloroplast thylakoid membrane. It catalyses the reaction a plastoquinone + NADH + (n+1) H(+)(in) = a plastoquinol + NAD(+) + n H(+)(out). It carries out the reaction a plastoquinone + NADPH + (n+1) H(+)(in) = a plastoquinol + NADP(+) + n H(+)(out). NDH shuttles electrons from NAD(P)H:plastoquinone, via FMN and iron-sulfur (Fe-S) centers, to quinones in the photosynthetic chain and possibly in a chloroplast respiratory chain. The immediate electron acceptor for the enzyme in this species is believed to be plastoquinone. Couples the redox reaction to proton translocation, and thus conserves the redox energy in a proton gradient. This Olimarabidopsis pumila (Dwarf rocket) protein is NAD(P)H-quinone oxidoreductase subunit K, chloroplastic.